The following is an 823-amino-acid chain: MEGAGGANDKKKISSERRKEKSRDAARSRRSKESEVFYELAHQLPLPHNVSSHLDKASVMRLTISYLRVRKLLDAGDLDIEDEMKAQMNCFYLKALDGFVMVLTDDGDMIYISDNVNKYMGLTQFELTGHSVFDFTHPCDHEEMREMLTHRNGLVKKGKEQNTQRSFFLRMKCTLTSRGRTMNIKSATWKVLHCTGHIHVYDTNSNQSQCGYKKPPMTCLVLICEPIPHPSNIEIPLDSKTFLSRHSLDMKFSYCDERITELMGYEPEELLGRSIYEYYHALDSDHLTKTHHDMFTKGQVTTGQYRMLAKRGGYVWIETQATVIYNTKNSQPQCIVCVNYVVSGIIQHDLIFSLQQTECVLKPVESSDMKMTQLFTKVESEDTSSLFDKLKKEPDALTLLAPAAGDTIISLDFGSNDTETDDQQLEEVPLYNDVMLPSSNEKLQNINLAMSPLPASETPKPLRSSADPALNQEVALKLEPNPESLELSFTMPQIQDQPASPSDGSTRQSSPEPNSPSEYCFDVDSDMVNEFKLELVEKLFAEDTEAKNPFSTQDTDLDLEMLAPYIPMDDDFQLRSFDQLSPLENSSTSPQSASTNTVFQPTQMQKPPIATVTTTATSDELKTVTKDGMEDIKILIAFPSPPHVPKEPPCATTSPYSDTGSRTASPNRAGKGVIEQTEKSHPRSPNVLSVALSQRTTAPEEELNPKILALQNAQRKRKIEHDGSLFQAVGIGTLLQQPDDRATTTSLSWKRVKGCKSSEQNGMEQKTIILIPSDLACRLLGQSMDESGLPQLTSYDCEVNAPIQGSRNLLQGEELLRALDQVN.

The segment at 1 to 30 (MEGAGGANDKKKISSERRKEKSRDAARSRR) is disordered. The tract at residues 1 to 401 (MEGAGGANDK…KEPDALTLLA (401 aa)) is interaction with TSGA10. The segment covering 8 to 30 (NDKKKISSERRKEKSRDAARSRR) has biased composition (basic and acidic residues). The bHLH domain occupies 17 to 70 (RRKEKSRDAARSRRSKESEVFYELAHQLPLPHNVSSHLDKASVMRLTISYLRVR). The segment at 21–30 (KSRDAARSRR) is DNA-binding. Positions 85-158 (KAQMNCFYLK…THRNGLVKKG (74 aa)) constitute a PAS 1 domain. A required for heterodimer formation with ARNT region spans residues 170-191 (RMKCTLTSRGRTMNIKSATWKV). Positions 228–298 (PHPSNIEIPL…KTHHDMFTKG (71 aa)) constitute a PAS 2 domain. Ser247 carries the post-translational modification Phosphoserine; by CK1. A PAC domain is found at 302-345 (TGQYRMLAKRGGYVWIETQATVIYNTKNSQPQCIVCVNYVVSGI). Positions 401-600 (APAAGDTIIS…QSASTNTVFQ (200 aa)) are ODD. A 4-hydroxyproline modification is found at Pro402. Residues 494-517 (IQDQPASPSDGSTRQSSPEPNSPS) are compositionally biased toward polar residues. Residues 494–521 (IQDQPASPSDGSTRQSSPEPNSPSEYCF) form a disordered region. The tract at residues 531–575 (FKLELVEKLFAEDTEAKNPFSTQDTDLDLEMLAPYIPMDDDFQLR) is NTAD. N6-acetyllysine; alternate is present on Lys532. Lys532 participates in a covalent cross-link: Glycyl lysine isopeptide (Lys-Gly) (interchain with G-Cter in ubiquitin); alternate. Glycyl lysine isopeptide (Lys-Gly) (interchain with G-Cter in ubiquitin) cross-links involve residues Lys538 and Lys547. Position 551 is a phosphoserine; by GSK3-beta (Ser551). Thr555 carries the post-translational modification Phosphothreonine; by GSK3-beta. 4-hydroxyproline is present on Pro564. Ser576 bears the Phosphoserine; by PLK3 mark. An ID region spans residues 576–782 (SFDQLSPLEN…SDLACRLLGQ (207 aa)). 2 disordered regions span residues 581 to 602 (SPLE…FQPT) and 639 to 685 (PSPP…PRSP). The residue at position 589 (Ser589) is a Phosphoserine; by GSK3-beta. Positions 651–666 (ATTSPYSDTGSRTASP) are enriched in polar residues. Ser654 is subject to Phosphoserine; by PLK3. Lys706 is subject to N6-acetyllysine. The Nuclear localization signal motif lies at 715 to 721 (RKRKIEH). Residues 783-823 (SMDESGLPQLTSYDCEVNAPIQGSRNLLQGEELLRALDQVN) form a CTAD region. Cys797 is modified (S-nitrosocysteine). Asn800 carries the post-translational modification (3S)-3-hydroxyasparagine.

Interacts with the ARNT; forms a heterodimer that binds core DNA sequence 5'-TACGTG-3' within the hypoxia response element (HRE) of target gene promoters. Interacts with COPS5; the interaction increases the transcriptional activity of HIF1A through increased stability. Interacts with EP300 (via TAZ-type 1 domains); the interaction is stimulated in response to hypoxia and inhibited by CITED2. Interacts with CREBBP (via TAZ-type 1 domains). Interacts with NCOA1, NCOA2, APEX1 and HSP90. Interacts (hydroxylated within the ODD domain) with VHLL (via beta domain); the interaction, leads to polyubiquitination and subsequent HIF1A proteasomal degradation. During hypoxia, sumoylated HIF1A also binds VHL; the interaction promotes the ubiquitination of HIF1A. Interacts with SENP1; the interaction desumoylates HIF1A resulting in stabilization and activation of transcription. Interacts (via the ODD domain) with NAA10; the interaction appears not to acetylate HIF1A nor have any affect on protein stability, during hypoxia. Interacts with RWDD3; the interaction enhances HIF1A sumoylation. Interacts with TSGA10. Interacts with HIF3A. Interacts with RORA (via the DNA binding domain); the interaction enhances HIF1A transcription under hypoxia through increasing protein stability. Interaction with PSMA7 inhibits the transactivation activity of HIF1A under both normoxic and hypoxia-mimicking conditions. Interacts with USP20. Interacts with RACK1; promotes HIF1A ubiquitination and proteasome-mediated degradation. Interacts (via N-terminus) with USP19. Interacts with SIRT2. Interacts (deacetylated form) with EGLN1. Interacts with CBFA2T3. Interacts with HSP90AA1 and HSP90AB1. Interacts with DCUN1D1; this interaction increases the interaction between VHL and DCUN1D1. Interacts with HIF1AN. In terms of processing, S-nitrosylation of Cys-797 may be responsible for increased recruitment of p300 coactivator necessary for transcriptional activity of HIF-1 complex. Post-translationally, acetylation of Lys-532 by ARD1 increases interaction with VHL and stimulates subsequent proteasomal degradation. Deacetylation of Lys-706 by SIRT2 increases its interaction with and hydroxylation by EGLN1 thereby inactivating HIF1A activity by inducing its proteasomal degradation. Ubiquitinated; in normoxia, following hydroxylation and interaction with VHL. Lys-532 appears to be the principal site of ubiquitination. Clioquinol, the Cu/Zn-chelator, inhibits ubiquitination through preventing hydroxylation at Asn-800. Ubiquitinated by E3 ligase VHL. Deubiquitinated by UCHL1. In terms of processing, requires phosphorylation for DNA-binding. Phosphorylation at Ser-247 by CSNK1D/CK1 represses kinase activity and impairs ARNT binding. Phosphorylation by GSK3-beta and PLK3 promote degradation by the proteasome. Post-translationally, the iron and 2-oxoglutarate dependent 3-hydroxylation of asparagine is (S) stereospecific within HIF CTAD domains. Sumoylated; with SUMO1 under hypoxia. Sumoylation is enhanced through interaction with RWDD3. Both sumoylation and desumoylation seem to be involved in the regulation of its stability during hypoxia. Sumoylation can promote either its stabilization or its VHL-dependent degradation by promoting hydroxyproline-independent HIF1A-VHL complex binding, thus leading to HIF1A ubiquitination and proteasomal degradation. Desumoylation by SENP1 increases its stability amd transcriptional activity. There is a disaccord between various publications on the effect of sumoylation and desumoylation on its stability and transcriptional activity. In terms of processing, in normoxia, is hydroxylated on Pro-402 and Pro-564 in the oxygen-dependent degradation domain (ODD) by EGLN1/PHD2 and EGLN2/PHD1. EGLN3/PHD3 has also been shown to hydroxylate Pro-564. The hydroxylated prolines promote interaction with VHL, initiating rapid ubiquitination and subsequent proteasomal degradation. Deubiquitinated by USP20. Under hypoxia, proline hydroxylation is impaired and ubiquitination is attenuated, resulting in stabilization. In normoxia, is hydroxylated on Asn-800 by HIF1AN, thus abrogating interaction with CREBBP and EP300 and preventing transcriptional activation. Repressed by iron ion, via Fe(2+) prolyl hydroxylase (PHD) enzymes-mediated hydroxylation and subsequent proteasomal degradation.

It is found in the cytoplasm. Its subcellular location is the nucleus. Induced by reactive oxygen species (ROS). Its function is as follows. Functions as a master transcriptional regulator of the adaptive response to hypoxia. Under hypoxic conditions, activates the transcription of over 40 genes, including erythropoietin, glucose transporters, glycolytic enzymes, vascular endothelial growth factor, HILPDA, and other genes whose protein products increase oxygen delivery or facilitate metabolic adaptation to hypoxia. Plays an essential role in embryonic vascularization, tumor angiogenesis and pathophysiology of ischemic disease. Heterodimerizes with ARNT; heterodimer binds to core DNA sequence 5'-TACGTG-3' within the hypoxia response element (HRE) of target gene promoters. Activation requires recruitment of transcriptional coactivators such as CREBBP and EP300. Activity is enhanced by interaction with NCOA1 and/or NCOA2. Interaction with redox regulatory protein APEX1 seems to activate CTAD and potentiates activation by NCOA1 and CREBBP. Involved in the axonal distribution and transport of mitochondria in neurons during hypoxia. This chain is Hypoxia-inducible factor 1-alpha (HIF1A), found in Bos taurus (Bovine).